A 493-amino-acid chain; its full sequence is Glycerol kinase (493 aa).

T13 provides a ligand contact to ADP. Residues T13, T14, and S15 each coordinate ATP. T13 is a binding site for sn-glycerol 3-phosphate. Position 17 (R17) interacts with ADP. Sn-glycerol 3-phosphate-binding residues include R83, E84, Y135, and D244. Residues R83, E84, Y135, D244, and Q245 each contribute to the glycerol site. ADP-binding residues include T266 and G309. ATP contacts are provided by T266, G309, Q313, and G410. ADP contacts are provided by G410 and N414.

This sequence belongs to the FGGY kinase family.

It carries out the reaction glycerol + ATP = sn-glycerol 3-phosphate + ADP + H(+). The protein operates within polyol metabolism; glycerol degradation via glycerol kinase pathway; sn-glycerol 3-phosphate from glycerol: step 1/1. With respect to regulation, inhibited by fructose 1,6-bisphosphate (FBP). Functionally, key enzyme in the regulation of glycerol uptake and metabolism. Catalyzes the phosphorylation of glycerol to yield sn-glycerol 3-phosphate. The protein is Glycerol kinase of Shewanella pealeana (strain ATCC 700345 / ANG-SQ1).